The following is a 304-amino-acid chain: Chromo domain-containing protein cec-1 (304 aa).

The Chromo domain maps to 8–66 (YTVESILEHRKKKGKSEFYIKWLGYDHTHNSWEPKENIVDPTLIEAFFTREAARKAEIK). Positions 63-73 (AEIKAKKDKMA) are enriched in basic and acidic residues. Disordered stretches follow at residues 63–235 (AEIK…EIQL) and 248–304 (VEPA…AIIE). Low complexity predominate over residues 75–102 (GKKGASSKASASVSKASASTPARGAKAA). The span at 106–116 (PPKKSPPKRQR) shows a compositional bias: basic residues. Residues 122-141 (IRPDSDTDEEHSSADKKSKA) show a composition bias toward basic and acidic residues. Acidic residues-rich tracts occupy residues 142 to 152 (EDEEEVEDDEE), 163 to 204 (EEPE…DVQL), and 212 to 233 (EEEE…EEEI). Residues 248–292 (VEPAVATPEPSEPSSSEKAVVENGSSSAAAGNSASKPEVSAVEVV) show a composition bias toward low complexity. The segment covering 293-304 (TVEDDDDIAIIE) has biased composition (acidic residues).

It localises to the nucleus. Its subcellular location is the chromosome. This Caenorhabditis elegans protein is Chromo domain-containing protein cec-1 (cec-1).